The primary structure comprises 238 residues: MTEPVSDQTALVLFSGGQDSATCLAWALSRFARVEMIGFDYGQRHAVELDCRAKLLDGFRAISSEWASKLGDSHTLAIPTLSAISDTALTRDVEIAMGADGLPNTFVPGRNLIFLTFAAALAYRRGIADIVGGMCETDYSGYPDCRDDTIKALQGAISLGMARDFELHTPLMWRDKAATWQLAHDLGGAALVDLIREHSHTCYLGERGERHDWGYGCGECPACALRARGWREYRTRTG.

Residue 14 to 24 (FSGGQDSATCL) participates in ATP binding. Positions 202, 217, 220, and 223 each coordinate Zn(2+).

This sequence belongs to the QueC family. Zn(2+) serves as cofactor.

The enzyme catalyses 7-carboxy-7-deazaguanine + NH4(+) + ATP = 7-cyano-7-deazaguanine + ADP + phosphate + H2O + H(+). It functions in the pathway purine metabolism; 7-cyano-7-deazaguanine biosynthesis. Catalyzes the ATP-dependent conversion of 7-carboxy-7-deazaguanine (CDG) to 7-cyano-7-deazaguanine (preQ(0)). In Rhodopseudomonas palustris (strain HaA2), this protein is 7-cyano-7-deazaguanine synthase 1.